A 359-amino-acid polypeptide reads, in one-letter code: Malonyl-CoA reductase (359 aa).

16–19 serves as a coordination point for NADP(+); it reads TGLV. The active-site Acyl-thioester intermediate is the Cys-153. 183–184 serves as a coordination point for NADP(+); that stretch reads SG. Residue His-248 is the Proton acceptor of the active site. 335 to 336 contacts NADP(+); it reads NT.

Belongs to the aspartate-semialdehyde dehydrogenase family. In terms of assembly, homodimer and possibly a tetramer. Mg(2+) serves as cofactor. It depends on Mn(2+) as a cofactor.

The catalysed reaction is 3-oxopropanoate + NADP(+) + CoA = malonyl-CoA + NADPH + H(+). Its activity is regulated as follows. Activated by dithioerythritol (5 mM) and inhibited by the thiol-blocking agent iodoacetamide (0.1 mM). Functionally, catalyzes the reduction of malonyl-CoA to malonate semialdehyde, a key step in the 3-hydroxypropanoate and the 3-hydroxypropanoate/4-hydroxybutyrate cycles. Can also use succinyl-CoA and succinate semialdehyde as substrates but at a lower rate than malonyl-CoA. This is Malonyl-CoA reductase (mcr) from Sulfurisphaera tokodaii (strain DSM 16993 / JCM 10545 / NBRC 100140 / 7) (Sulfolobus tokodaii).